A 29-amino-acid chain; its full sequence is Cycloviolacin-O15 (29 aa).

A cross-link (cyclopeptide (Gly-Asn)) is located at residues 1 to 29; that stretch reads GLVPCGETCFTGKCYTPGCSCSYPICKKN. Disulfide bonds link C5–C19, C9–C21, and C14–C26.

In terms of processing, this is a cyclic peptide.

In terms of biological role, probably participates in a plant defense mechanism. Has hemolytic activity. In Viola odorata (Sweet violet), this protein is Cycloviolacin-O15.